The sequence spans 227 residues: Isopentenyl-diphosphate Delta-isomerase 1 (227 aa).

Lys36 serves as a coordination point for substrate. The Mg(2+) site is built by His40 and His51. Residues 49 to 199 (LLHRAFSVFL…EIKITPWFQI (151 aa)) enclose the Nudix hydrolase domain. Residues Arg70 and Lys74 each coordinate substrate. The active site involves Cys86. Position 87 (Ser87) interacts with substrate. Residues Glu146 and Glu148 each coordinate Mg(2+). Glu148 is an active-site residue. The residue at position 176 (Lys176) is an N6-acetyllysine. The short motif at 225 to 227 (HRM) is the Microbody targeting signal element.

This sequence belongs to the IPP isomerase type 1 family. As to quaternary structure, monomer. The cofactor is Mg(2+).

It localises to the peroxisome. The catalysed reaction is isopentenyl diphosphate = dimethylallyl diphosphate. It participates in isoprenoid biosynthesis; dimethylallyl diphosphate biosynthesis; dimethylallyl diphosphate from isopentenyl diphosphate: step 1/1. Catalyzes the 1,3-allylic rearrangement of the homoallylic substrate isopentenyl (IPP) to its highly electrophilic allylic isomer, dimethylallyl diphosphate (DMAPP). The sequence is that of Isopentenyl-diphosphate Delta-isomerase 1 (IDI1) from Macaca fascicularis (Crab-eating macaque).